The following is a 241-amino-acid chain: Large ribosomal subunit protein uL3 (241 aa).

Disordered regions lie at residues 139–164 (VSHR…KMPG) and 215–241 (DAPK…QEGV). Residue Gln-151 is modified to N5-methylglutamine. A compositionally biased stretch (low complexity) spans 225–241 (ANGGEEAAAPAAEQEGV).

The protein belongs to the universal ribosomal protein uL3 family. As to quaternary structure, part of the 50S ribosomal subunit. Forms a cluster with proteins L14 and L19. Methylated by PrmB.

Its function is as follows. One of the primary rRNA binding proteins, it binds directly near the 3'-end of the 23S rRNA, where it nucleates assembly of the 50S subunit. This is Large ribosomal subunit protein uL3 from Rhodopseudomonas palustris (strain HaA2).